The primary structure comprises 37 residues: Diuretic hormone 1 (37 aa).

Belongs to the sauvagine/corticotropin-releasing factor/urotensin I family.

Its subcellular location is the secreted. Functionally, stimulates fluid secretion by the Malpighian tubules. Increases cyclic AMP production. This chain is Diuretic hormone 1, found in Tenebrio molitor (Yellow mealworm beetle).